Here is a 154-residue protein sequence, read N- to C-terminus: MGLSDQEWQHVLTIWGKVESDLAGHGHEILMRLFHDLPETLDRFERFKGLTTPDQMKASEELKKHGVTVLTQLGKILKLKGKHEAELKPLAQTHATKHKIPVKYLEFISEVIIKVIAEKHSADFGADSQAAMKKALELFRNDMASKYKEFGFQG.

Positions 2-148 constitute a Globin domain; the sequence is GLSDQEWQHV…FRNDMASKYK (147 aa). His65 provides a ligand contact to nitrite. O2 is bound at residue His65. A heme b-binding site is contributed by His94.

Monomeric.

The protein localises to the cytoplasm. Its subcellular location is the sarcoplasm. The catalysed reaction is Fe(III)-heme b-[protein] + nitric oxide + H2O = Fe(II)-heme b-[protein] + nitrite + 2 H(+). It catalyses the reaction H2O2 + AH2 = A + 2 H2O. In terms of biological role, monomeric heme protein which primary function is to store oxygen and facilitate its diffusion within muscle tissues. Reversibly binds oxygen through a pentacoordinated heme iron and enables its timely and efficient release as needed during periods of heightened demand. Depending on the oxidative conditions of tissues and cells, and in addition to its ability to bind oxygen, it also has a nitrite reductase activity whereby it regulates the production of bioactive nitric oxide. Under stress conditions, like hypoxia and anoxia, it also protects cells against reactive oxygen species thanks to its pseudoperoxidase activity. This is Myoglobin from Dromaius novaehollandiae (Emu).